The primary structure comprises 3013 residues: Protein furry homolog-like (3013 aa).

Position 2 is an N-acetylserine (Ser2). The interval 90–109 is disordered; the sequence is DESYEYRPRSSTKSKGDEQQ. Ser844 is modified (phosphoserine). Disordered stretches follow at residues 878 to 897 and 1476 to 1498; these read SSST…LAST and VTSG…PDNK. Low complexity predominate over residues 1476-1486; that stretch reads VTSGTTSSSNT. Residues Ser1914, Ser1935, Ser1941, Ser1945, and Ser1957 each carry the phosphoserine modification. Phosphothreonine is present on Thr1959. A phosphoserine mark is found at Ser1978, Ser2272, and Ser2454. The disordered stretch occupies residues 2459–2492; the sequence is DKGDTPSLQEYQCSSSTPSLNLTNQEDTDESSEE. The span at 2464–2483 shows a compositional bias: polar residues; it reads PSLQEYQCSSSTPSLNLTNQ. Ser2499 carries the post-translational modification Phosphoserine. Disordered regions lie at residues 2508-2567 and 2636-2660; these read LNSD…DTTS and EEEA…EVQT. 2 stretches are compositionally biased toward polar residues: residues 2528 to 2539 and 2555 to 2567; these read SEDSTGSITTEE and DNAN…DTTS.

Belongs to the furry protein family. Widely expressed with higher expression in colon, placenta, brain and cells of lymphoid origin.

In terms of biological role, plays a key role in maintaining the integrity of polarized cell extensions during morphogenesis, regulates the actin cytoskeleton and plays a key role in patterning sensory neuron dendritic fields by promoting avoidance between homologous dendrites as well as by limiting dendritic branching. May function as a transcriptional activator. This is Protein furry homolog-like (FRYL) from Homo sapiens (Human).